Consider the following 330-residue polypeptide: Ribosomal RNA small subunit methyltransferase H (330 aa).

Residues Gly-50–His-52, Asp-69, Leu-103, Asp-117, and Gln-124 contribute to the S-adenosyl-L-methionine site.

It belongs to the methyltransferase superfamily. RsmH family.

The protein resides in the cytoplasm. It catalyses the reaction cytidine(1402) in 16S rRNA + S-adenosyl-L-methionine = N(4)-methylcytidine(1402) in 16S rRNA + S-adenosyl-L-homocysteine + H(+). Functionally, specifically methylates the N4 position of cytidine in position 1402 (C1402) of 16S rRNA. The sequence is that of Ribosomal RNA small subunit methyltransferase H from Saccharopolyspora erythraea (strain ATCC 11635 / DSM 40517 / JCM 4748 / NBRC 13426 / NCIMB 8594 / NRRL 2338).